Reading from the N-terminus, the 887-residue chain is Translation initiation factor IF-2 (887 aa).

Disordered stretches follow at residues 31-87 (KLAQ…PRRI), 94-113 (SFVS…DSDA), and 129-285 (VETE…KWRK). The span at 42 to 59 (SSSEKPSTKVPEKIAKEK) shows a compositional bias: basic and acidic residues. 2 stretches are compositionally biased toward basic and acidic residues: residues 150-171 (VVAK…KEPP) and 199-212 (PKKE…EKTK). Residues 213–223 (TTQTKPQQSSD) are compositionally biased toward low complexity. The span at 241-273 (YRRDVSKKSGSDFRDRAKKDDNPKAFTGRDRYG) shows a compositional bias: basic and acidic residues. Residues 393–562 (TRPPIVAFMG…ALQAEVLELK (170 aa)) form the tr-type G domain. A G1 region spans residues 402–409 (GHVDHGKT). Position 402-409 (402-409 (GHVDHGKT)) interacts with GTP. Positions 427 to 431 (AITQH) are G2. The interval 448–451 (DTPG) is G3. GTP-binding positions include 448–452 (DTPGH) and 502–505 (NKCD). The segment at 502-505 (NKCD) is G4. Residues 538-540 (SAK) form a G5 region.

This sequence belongs to the TRAFAC class translation factor GTPase superfamily. Classic translation factor GTPase family. IF-2 subfamily.

It is found in the cytoplasm. Functionally, one of the essential components for the initiation of protein synthesis. Protects formylmethionyl-tRNA from spontaneous hydrolysis and promotes its binding to the 30S ribosomal subunits. Also involved in the hydrolysis of GTP during the formation of the 70S ribosomal complex. The sequence is that of Translation initiation factor IF-2 from Chlamydia caviae (strain ATCC VR-813 / DSM 19441 / 03DC25 / GPIC) (Chlamydophila caviae).